The following is a 125-amino-acid chain: Succinate dehydrogenase cytochrome b556 subunit (125 aa).

Residues 1 to 29 (MTKTKQEIYNKRPTSPHLTIYKPQISSTL) lie on the Cytoplasmic side of the membrane. Residues 30–55 (SILHRMTGVALFFAVSILAWWFILSK) form a helical membrane-spanning segment. The Periplasmic segment spans residues 56 to 68 (FDSNYIKLANCCC). The helical transmembrane segment at 69 to 89 (IIKICLILTSFAWFYHLCNGI) threads the bilayer. A heme-binding site is contributed by histidine 84. The Cytoplasmic portion of the chain corresponds to 90 to 104 (RHLFWDIGLGFSIKA). Residues 105–125 (VNLTGWSVVICSVLFTILLWV) traverse the membrane as a helical segment.

It belongs to the cytochrome b560 family. Part of an enzyme complex containing four subunits: a flavoprotein, an iron-sulfur protein, plus two membrane-anchoring proteins, SdhC and SdhD. The complex can form homotrimers. Requires heme as cofactor.

The protein resides in the cell inner membrane. It participates in carbohydrate metabolism; tricarboxylic acid cycle. Its function is as follows. Membrane-anchoring subunit of succinate dehydrogenase (SDH). The sequence is that of Succinate dehydrogenase cytochrome b556 subunit (sdhC) from Rickettsia bellii (strain RML369-C).